The sequence spans 445 residues: Phosphoglucosamine mutase (445 aa).

Catalysis depends on Ser-102, which acts as the Phosphoserine intermediate. The Mg(2+) site is built by Ser-102, Asp-241, Asp-243, and Asp-245. A Phosphoserine modification is found at Ser-102.

It belongs to the phosphohexose mutase family. It depends on Mg(2+) as a cofactor. In terms of processing, activated by phosphorylation.

The catalysed reaction is alpha-D-glucosamine 1-phosphate = D-glucosamine 6-phosphate. Its function is as follows. Catalyzes the conversion of glucosamine-6-phosphate to glucosamine-1-phosphate. The sequence is that of Phosphoglucosamine mutase from Shewanella halifaxensis (strain HAW-EB4).